Reading from the N-terminus, the 316-residue chain is MHSKDAVIAIYGPTASGKTALSLALCEQLDCEIISVDSALIYRGMDIGTAKPSAEEQNLVPHHLLDIRDPAETYSAADFQKDALALIDDIQQRGKVPLLVGGTMLYFKALLEGLSHLPESDTSVREKLTAELHEKGLAELHSRLQKVDPTSAKRIHPNDPQRILRALEVYEIAGKPLTELTRERHGQLTKPIYQFAVAPVERKVLHQRIEQRFDHMLAQPFKEEVATLFARPDLHPDLPSIRSVGYRQMWQHLAGELSYDEMRERGIIATRQLAKRQMTWLRGWPGVHWLETGDLNMQAKVMTAMQQPAKIFNSKD.

Position 12 to 19 (12 to 19 (GPTASGKT)) interacts with ATP. 14 to 19 (TASGKT) serves as a coordination point for substrate. Interaction with substrate tRNA regions lie at residues 37-40 (DSAL) and 161-165 (QRILR).

The protein belongs to the IPP transferase family. As to quaternary structure, monomer. The cofactor is Mg(2+).

It carries out the reaction adenosine(37) in tRNA + dimethylallyl diphosphate = N(6)-dimethylallyladenosine(37) in tRNA + diphosphate. Its function is as follows. Catalyzes the transfer of a dimethylallyl group onto the adenine at position 37 in tRNAs that read codons beginning with uridine, leading to the formation of N6-(dimethylallyl)adenosine (i(6)A). The sequence is that of tRNA dimethylallyltransferase from Idiomarina loihiensis (strain ATCC BAA-735 / DSM 15497 / L2-TR).